Consider the following 881-residue polypeptide: Valine--tRNA ligase (881 aa).

Positions 76-86 match the 'HIGH' region motif; sequence PTVSGSLHIGH. Positions 493-526 are disordered; that stretch reads DSPILPDESQLPVDPSSQAPEGYTEDQRGKPGGF. A 'KMSKS' region motif is present at residues 608–612; sequence KMSKS. Residue K611 participates in ATP binding.

Belongs to the class-I aminoacyl-tRNA synthetase family. ValS type 2 subfamily. As to quaternary structure, monomer.

The protein localises to the cytoplasm. The enzyme catalyses tRNA(Val) + L-valine + ATP = L-valyl-tRNA(Val) + AMP + diphosphate. In terms of biological role, catalyzes the attachment of valine to tRNA(Val). As ValRS can inadvertently accommodate and process structurally similar amino acids such as threonine, to avoid such errors, it has a 'posttransfer' editing activity that hydrolyzes mischarged Thr-tRNA(Val) in a tRNA-dependent manner. This is Valine--tRNA ligase from Thermobifida fusca (strain YX).